A 188-amino-acid chain; its full sequence is Ribosome maturation factor RimM (188 aa).

The PRC barrel domain occupies 98 to 171 (EGEFFQGDLV…RIVIHPPEYV (74 aa)).

Belongs to the RimM family. As to quaternary structure, binds ribosomal protein uS19.

It is found in the cytoplasm. An accessory protein needed during the final step in the assembly of 30S ribosomal subunit, possibly for assembly of the head region. Essential for efficient processing of 16S rRNA. May be needed both before and after RbfA during the maturation of 16S rRNA. It has affinity for free ribosomal 30S subunits but not for 70S ribosomes. The polypeptide is Ribosome maturation factor RimM (Myxococcus xanthus (strain DK1622)).